The sequence spans 255 residues: tRNA (guanine-N(7)-)-methyltransferase (255 aa).

S-adenosyl-L-methionine-binding residues include glutamate 86, glutamate 111, aspartate 138, and aspartate 161. Residue aspartate 161 is part of the active site. Substrate-binding positions include lysine 165, aspartate 197, and 234 to 237 (TKFE).

It belongs to the class I-like SAM-binding methyltransferase superfamily. TrmB family.

It catalyses the reaction guanosine(46) in tRNA + S-adenosyl-L-methionine = N(7)-methylguanosine(46) in tRNA + S-adenosyl-L-homocysteine. Its pathway is tRNA modification; N(7)-methylguanine-tRNA biosynthesis. Functionally, catalyzes the formation of N(7)-methylguanine at position 46 (m7G46) in tRNA. This Pasteurella multocida (strain Pm70) protein is tRNA (guanine-N(7)-)-methyltransferase.